Here is a 309-residue protein sequence, read N- to C-terminus: Metal ABC transporter substrate-binding lipoprotein FimA (309 aa).

Positions 1-20 (MKKIASVLALFVALLFGLLA) are cleaved as a signal peptide. C21 carries N-palmitoyl cysteine lipidation. C21 carries S-diacylglycerol cysteine lipidation. A divalent metal cation contacts are provided by H67, H139, E205, and D280.

It belongs to the bacterial solute-binding protein 9 family. Lipoprotein receptor antigen (Lrai) subfamily.

It is found in the cell membrane. In terms of biological role, part of an ATP-binding cassette (ABC) transport system involved in metal import. Binds a metal with high affinity and specificity and delivers it to the membrane permease for translocation into the cytoplasm. Also acts as an adhesin which is involved on adherence to extracellular matrix. It is an important factor in pathogenesis and infection. May contribute to the formation and accumulation of dental plaque. The sequence is that of Metal ABC transporter substrate-binding lipoprotein FimA (fimA) from Streptococcus parasanguinis.